The following is a 342-amino-acid chain: Pre-mRNA-splicing factor 18 (342 aa).

At Met1 the chain carries N-acetylmethionine.

Belongs to the PRP18 family. As to quaternary structure, heterodimer with PPIH. Interacts with PRPF4 and with the spliceosome. Part of a complex containing U4/U6 snRNPs.

The protein localises to the nucleus speckle. Participates in the second step of pre-mRNA splicing. The chain is Pre-mRNA-splicing factor 18 (Prpf18) from Mus musculus (Mouse).